A 98-amino-acid polypeptide reads, in one-letter code: Dehydrin HIRD11 (98 aa).

The segment at 1-98 is disordered; sequence MAGLINKIGD…HSSSSDSDSD (98 aa). The segment covering 19–72 has biased composition (basic and acidic residues); that stretch reads KEGEHKKEEEHKKHVDEHKSGEHKEGIVDKIKDKIHGGEGKSHDGEGKSHDGEK. Over residues 73–82 the composition is skewed to basic residues; the sequence is KKKKDKKEKK.

Belongs to the KS-type dehydrin family. As to quaternary structure, interacts with PXL1. In terms of processing, phosphorylated in vivo. Phosphorylated in vitro by PXL1. As to expression, highly expressed in the cambial zone of the stem vasculature (at protein level). Expressed in roots, rosettes leaves, stems, cauline leaves, flowers and siliques.

The protein resides in the cytoplasm. Its subcellular location is the nucleus. Intrinsically disordered and metal-binding protein. Binds to the divalent cations cobalt, nickel, copper and zinc, but not to magnesium, calcium, manganese or cadmium. Binding to metal ions decreases disordered state, decreases susceptibility to trypsin and promotes self-association. Can reduce the formation of reactive oxygen species (ROS) in a copper-ascorbate in vitro system. In Arabidopsis thaliana (Mouse-ear cress), this protein is Dehydrin HIRD11.